Here is a 929-residue protein sequence, read N- to C-terminus: SCY1-like protein 2 (929 aa).

Residues 32-327 (FDVGRHIASG…ADQMTKIPFF (296 aa)) enclose the Protein kinase domain. Residues 443-479 (DEIKNSVLPMVYRALEAPSIQIQELCLNIIPTFANLI) form an HEAT repeat. Residues 661 to 701 (ESENKEDGLQNKHKRASLTLEEKQKLAKEQEQAQKLKSQQP) adopt a coiled-coil conformation. Ser-677 carries the post-translational modification Phosphoserine. The segment covering 684 to 694 (QKLAKEQEQAQ) has biased composition (basic and acidic residues). Disordered regions lie at residues 684–709 (QKLA…VHTP) and 906–929 (NFAQ…DLFG). Over residues 695–705 (KLKSQQPLKPQ) the composition is skewed to low complexity. The segment at 699 to 929 (QQPLKPQVHT…ASNDLKDLFG (231 aa)) is necessary for interaction with AP2 complex and clathrin, interaction with clathrin is necessary for its targeting to the TGN and endosomal membranes. Thr-708 is subject to Phosphothreonine. The segment covering 912 to 922 (TTMTNSSSASN) has biased composition (polar residues).

The protein belongs to the protein kinase superfamily. As to quaternary structure, interacts with clathrin and AP2B1; the interaction mediates the association with the AP-2 complex. Post-translationally, could autophosphorylate in presence of poly-L-lysine.

Its subcellular location is the cytoplasmic vesicle. It localises to the clathrin-coated vesicle. The protein localises to the golgi apparatus. The protein resides in the trans-Golgi network membrane. It is found in the endosome membrane. Component of the AP2-containing clathrin coat that may regulate clathrin-dependent trafficking at plasma membrane, TGN and endosomal system. A possible serine/threonine-protein kinase toward the beta2-subunit of the plasma membrane adapter complex AP2 and other proteins in presence of poly-L-lysine has not been confirmed. By regulating the expression of excitatory receptors at synapses, plays an essential role in neuronal function and signaling and in brain development. This chain is SCY1-like protein 2, found in Homo sapiens (Human).